A 216-amino-acid chain; its full sequence is UPF0323 lipoprotein HPG27_212 (216 aa).

Positions 1–27 are cleaved as a signal peptide; that stretch reads MKKPYRKISDYAIVGGLSALVMVSIVG. The N-palmitoyl cysteine moiety is linked to residue cysteine 28. A lipid anchor (S-diacylglycerol cysteine) is attached at cysteine 28. Polar residues predominate over residues 159–170; the sequence is QRTYKSPQAYQR. The tract at residues 159–216 is disordered; the sequence is QRTYKSPQAYQRSQNSFSKSAPSASSMGGASKGQSGFFGSSRPTSSPAVSSGTRGFNS. The segment covering 171–209 has biased composition (low complexity); sequence SQNSFSKSAPSASSMGGASKGQSGFFGSSRPTSSPAVSS.

This sequence belongs to the UPF0323 family.

The protein localises to the cell membrane. In Helicobacter pylori (strain G27), this protein is UPF0323 lipoprotein HPG27_212.